A 291-amino-acid polypeptide reads, in one-letter code: uncharacterized protein (291 aa).

Essential for virus function. This is an uncharacterized protein from Sulfolobus spindle-shape virus 1 (SSV1).